We begin with the raw amino-acid sequence, 459 residues long: Proton-coupled folate transporter (459 aa).

Residue Met-1 is modified to N-acetylmethionine. Over 1-25 (MEGRVSPVGSSHRLLTAAVLFRGPV) the chain is Cytoplasmic. The residue at position 6 (Ser-6) is a Phosphoserine. A helical transmembrane segment spans residues 26–44 (EPLVFLANFALVLQGPLTT). Over 45–82 (QYIWHRISTELGYNGTRHRENCGNQSADPVLKEVETLT) the chain is Extracellular. N-linked (GlcNAc...) asparagine glycosylation is found at Asn-58 and Asn-68. Cys-66 and Cys-298 are joined by a disulfide. A helical membrane pass occupies residues 83–108 (SHWTLYMNVGGFLVGLFWSTLLGAWS). The Cytoplasmic segment spans residues 109-112 (DRVG). A helical transmembrane segment spans residues 113–135 (RRPLLVLASLGLLLQAVVSIFVV). Residues 136-140 (QLQLH) lie on the Extracellular side of the membrane. Residues 141–154 (IGFFVLGRALCALL) form a helical membrane-spanning segment. The Cytoplasmic portion of the chain corresponds to 155-177 (GDFNGLLAASFASVADVSSNHSR). Positions 156 and 185 each coordinate H(+). A helical membrane pass occupies residues 178–203 (TFRMALLEACIGVAGTLASLLGGHWL). Residues 204 to 208 (RAQGY) lie on the Extracellular side of the membrane. A helical membrane pass occupies residues 209–227 (ANPFWLALAVLIVMTLYAA). Residues 228-266 (FCFGETVKEPKSTRLFTLRHHRSIVQLYVVPAPEKSRMH) lie on the Cytoplasmic side of the membrane. A helical membrane pass occupies residues 267-289 (LALYSLAIFVVVTVHFGAQDILT). His-281 contributes to the H(+) binding site. Residues 290-302 (LYELSTPLCWDSK) lie on the Extracellular side of the membrane. The helical transmembrane segment at 303 to 325 (LIGYGSAAQHLPYLTSLLGLRLL) threads the bilayer. The Cytoplasmic segment spans residues 326–331 (QFCLAD). A helical transmembrane segment spans residues 332-351 (TWVAEIGLAFNILGMVVFAF). At 352 to 355 (ATIT) the chain is on the extracellular side. A helical transmembrane segment spans residues 356 to 376 (PLMFTGYGLLFLSLVTTPVIR). Over 377 to 388 (AKLSKLVSESEQ) the chain is Cytoplasmic. Residues 389–414 (GALFSAVACVNSLAMLMASGIFNSLY) traverse the membrane as a helical segment. The Extracellular segment spans residues 415-422 (PATLNFMK). The helical transmembrane segment at 423 to 441 (GFPFLLGAGLLFIPAILIG) threads the bilayer. Over 442 to 459 (VLEKVNPHPEFQQFPQNS) the chain is Cytoplasmic.

It belongs to the major facilitator superfamily. SLC46A family. Monomer. Expressed almost exclusively in the small intestine: expressed at high level in the upper half of the small intestine (duodenum and jejunum), expression decreases downwardly in the subsequent quarter and is undetectable in the last quarter (the lowest ileum). Expressed at low level in other tissues, including liver.

It localises to the cell membrane. The protein localises to the apical cell membrane. It is found in the basolateral cell membrane. The protein resides in the endosome membrane. Its subcellular location is the cytoplasm. It catalyses the reaction folate(in) + H(+)(in) = folate(out) + H(+)(out). It carries out the reaction (6S)-5-methyl-5,6,7,8-tetrahydrofolate(in) + H(+)(in) = (6S)-5-methyl-5,6,7,8-tetrahydrofolate(out) + H(+)(out). The enzyme catalyses methotrexate(in) + H(+)(in) = methotrexate(out) + H(+)(out). The catalysed reaction is pemetrexed(in) + H(+)(in) = pemetrexed(out) + H(+)(out). With respect to regulation, in contrast to human ortholog, not inhibited by myricetin. Functionally, proton-coupled folate symporter that mediates folate absorption using an H(+) gradient as a driving force. Involved in the intestinal absorption of folates at the brush-border membrane of the proximal jejunum, and the transport from blood to cerebrospinal fluid across the choroid plexus. Functions at acidic pH via alternate outward- and inward-open conformation states. Protonation of residues in the outward open state primes the protein for transport. Binding of folate promotes breaking of salt bridge network and subsequent closure of the extracellular gate, leading to the inward-open state and release of protons and folate. Also able to transport antifolate drugs, such as methotrexate and pemetrexed. Involved in FOLR1-mediated endocytosis by serving as a route of export of folates from acidified endosomes. Also acts as a lower-affinity, pH-independent heme carrier protein and constitutes the main importer of heme in the intestine. Imports heme in the retina and retinal pigment epithelium, in neurons of the hippocampus, in hepatocytes and in the renal epithelial cells. Hence, participates in the trafficking of heme and increases intracellular iron content. In Rattus norvegicus (Rat), this protein is Proton-coupled folate transporter.